A 231-amino-acid chain; its full sequence is ATP phosphoribosyltransferase (231 aa).

It belongs to the ATP phosphoribosyltransferase family. Short subfamily. As to quaternary structure, heteromultimer composed of HisG and HisZ subunits.

Its subcellular location is the cytoplasm. It carries out the reaction 1-(5-phospho-beta-D-ribosyl)-ATP + diphosphate = 5-phospho-alpha-D-ribose 1-diphosphate + ATP. Its pathway is amino-acid biosynthesis; L-histidine biosynthesis; L-histidine from 5-phospho-alpha-D-ribose 1-diphosphate: step 1/9. Its function is as follows. Catalyzes the condensation of ATP and 5-phosphoribose 1-diphosphate to form N'-(5'-phosphoribosyl)-ATP (PR-ATP). Has a crucial role in the pathway because the rate of histidine biosynthesis seems to be controlled primarily by regulation of HisG enzymatic activity. The chain is ATP phosphoribosyltransferase from Brucella ovis (strain ATCC 25840 / 63/290 / NCTC 10512).